A 936-amino-acid chain; its full sequence is Protein SIEL (936 aa).

As to quaternary structure, interacts with SHR, MGP, SCR, JKD, CPC, TMO7 and AGL21, but not with LFY or STM.

It is found in the nucleus. Its subcellular location is the endosome. The protein localises to the cytoplasm. It localises to the cell cortex. Intracellular shuttle that promotes movement of SHR from the stele into the endodermis. Required for SHR association to endosomes and localization, and for intercellular movement of SHR. This is Protein SIEL from Arabidopsis thaliana (Mouse-ear cress).